A 478-amino-acid chain; its full sequence is ATP synthase subunit beta (478 aa).

161–168 is an ATP binding site; it reads GGAGVGKT.

Belongs to the ATPase alpha/beta chains family. As to quaternary structure, F-type ATPases have 2 components, CF(1) - the catalytic core - and CF(0) - the membrane proton channel. CF(1) has five subunits: alpha(3), beta(3), gamma(1), delta(1), epsilon(1). CF(0) has four main subunits: a(1), b(1), b'(1) and c(9-12).

The protein localises to the cell inner membrane. It catalyses the reaction ATP + H2O + 4 H(+)(in) = ADP + phosphate + 5 H(+)(out). Produces ATP from ADP in the presence of a proton gradient across the membrane. The catalytic sites are hosted primarily by the beta subunits. The protein is ATP synthase subunit beta of Gloeobacter violaceus (strain ATCC 29082 / PCC 7421).